Here is a 319-residue protein sequence, read N- to C-terminus: tRNA dimethylallyltransferase (319 aa).

11–18 (GPTCSGKS) serves as a coordination point for ATP. 13 to 18 (TCSGKS) lines the substrate pocket. 2 interaction with substrate tRNA regions span residues 36–39 (DSMQ) and 160–164 (QRIAR).

Belongs to the IPP transferase family. In terms of assembly, monomer. It depends on Mg(2+) as a cofactor.

The enzyme catalyses adenosine(37) in tRNA + dimethylallyl diphosphate = N(6)-dimethylallyladenosine(37) in tRNA + diphosphate. Catalyzes the transfer of a dimethylallyl group onto the adenine at position 37 in tRNAs that read codons beginning with uridine, leading to the formation of N6-(dimethylallyl)adenosine (i(6)A). The protein is tRNA dimethylallyltransferase of Granulibacter bethesdensis (strain ATCC BAA-1260 / CGDNIH1).